Reading from the N-terminus, the 420-residue chain is UDP-glucuronic acid decarboxylase 1 (420 aa).

Met1 bears the N-acetylmethionine mark. Residues 1 to 19 (MVSKALLRLVSAVNRRRMK) are Cytoplasmic-facing. A helical; Signal-anchor for type II membrane protein transmembrane segment spans residues 20 to 40 (LLLGIALLAYVASVWGNFVNM). Residues 41–420 (RSIQENGELK…RIKKGRTRHN (380 aa)) lie on the Lumenal side of the membrane. At Thr94 the chain carries Phosphothreonine. Gly98, Phe99, Val100, Asp119, Asn120, Phe122, Thr123, Gly124, Asp144, and Val145 together coordinate NAD(+). Positions 149 and 150 each coordinate UDP-alpha-D-glucuronate. NAD(+) contacts are provided by Leu159 and Ser161. A UDP-alpha-D-glucuronate-binding site is contributed by Lys177. Residue Thr178 participates in NAD(+) binding. UDP-alpha-D-glucuronate contacts are provided by Asn185, Gly188, Lys191, and Arg192. NAD(+) is bound by residues Ala200, Tyr231, and Lys235. Tyr231 functions as the Proton acceptor in the catalytic mechanism. The UDP-alpha-D-glucuronate site is built by Tyr245, Gln248, and Glu249. Residues Thr261, His267, and Arg272 each coordinate NAD(+). An N-linked (GlcNAc...) asparagine glycan is attached at Asn316.

The protein belongs to the NAD(P)-dependent epimerase/dehydratase family. UDP-glucuronic acid decarboxylase subfamily. In terms of assembly, homodimer and homotetramer. Interacts with AKT1. The cofactor is NAD(+).

The protein resides in the golgi apparatus. The protein localises to the golgi stack membrane. It carries out the reaction UDP-alpha-D-glucuronate + H(+) = UDP-alpha-D-xylose + CO2. Its pathway is nucleotide-sugar biosynthesis; UDP-alpha-D-xylose biosynthesis; UDP-alpha-D-xylose from UDP-alpha-D-glucuronate: step 1/1. Functionally, catalyzes the NAD-dependent decarboxylation of UDP-glucuronic acid to UDP-xylose. Necessary for the biosynthesis of the core tetrasaccharide in glycosaminoglycan biosynthesis. This chain is UDP-glucuronic acid decarboxylase 1 (UXS1), found in Pongo abelii (Sumatran orangutan).